Here is a 168-residue protein sequence, read N- to C-terminus: Photosystem I assembly protein Ycf3 (168 aa).

TPR repeat units follow at residues 35-68 (AFTYYRDGMSAQSEGNYAEALQNYYEATRPEIDP), 72-105 (SYILYNIGLIHTSNGEHTKALEYYFRALERNPFL), and 120-153 (GEQAIRQGDSEIAETWSDQAAEYWKQAIALTPGN).

The protein belongs to the Ycf3 family.

Its subcellular location is the plastid. The protein resides in the chloroplast thylakoid membrane. Essential for the assembly of the photosystem I (PSI) complex. May act as a chaperone-like factor to guide the assembly of the PSI subunits. In Amborella trichopoda, this protein is Photosystem I assembly protein Ycf3.